The primary structure comprises 223 residues: Deoxyribose-phosphate aldolase (223 aa).

The Proton donor/acceptor role is filled by Asp89. Residue Lys152 is the Schiff-base intermediate with acetaldehyde of the active site. Lys181 acts as the Proton donor/acceptor in catalysis.

This sequence belongs to the DeoC/FbaB aldolase family. DeoC type 1 subfamily.

The protein resides in the cytoplasm. The catalysed reaction is 2-deoxy-D-ribose 5-phosphate = D-glyceraldehyde 3-phosphate + acetaldehyde. The protein operates within carbohydrate degradation; 2-deoxy-D-ribose 1-phosphate degradation; D-glyceraldehyde 3-phosphate and acetaldehyde from 2-deoxy-alpha-D-ribose 1-phosphate: step 2/2. Its function is as follows. Catalyzes a reversible aldol reaction between acetaldehyde and D-glyceraldehyde 3-phosphate to generate 2-deoxy-D-ribose 5-phosphate. This is Deoxyribose-phosphate aldolase from Bacillus cereus (strain ZK / E33L).